Reading from the N-terminus, the 476-residue chain is ATP synthase subunit beta (476 aa).

154 to 161 serves as a coordination point for ATP; that stretch reads GGAGVGKT.

This sequence belongs to the ATPase alpha/beta chains family. As to quaternary structure, F-type ATPases have 2 components, CF(1) - the catalytic core - and CF(0) - the membrane proton channel. CF(1) has five subunits: alpha(3), beta(3), gamma(1), delta(1), epsilon(1). CF(0) has four main subunits: a(1), b(1), b'(1) and c(9-12).

It localises to the cell inner membrane. It catalyses the reaction ATP + H2O + 4 H(+)(in) = ADP + phosphate + 5 H(+)(out). Functionally, produces ATP from ADP in the presence of a proton gradient across the membrane. The catalytic sites are hosted primarily by the beta subunits. The protein is ATP synthase subunit beta of Rhodopseudomonas palustris (strain BisA53).